Reading from the N-terminus, the 260-residue chain is MPNLLEKTRKITSILQHSVDSLETELPYNTMASRLADIIDCNACIINGGGTLLGYAMKYKTNTDRVEEFFEAKQFPDTYVKAASRVYDTEANLSVENELTIFPVESKDTYPGGLTTIAPIYGGGMRLGSLIIWRNDNEFSDDDLILVEISSTVVGIQLLNLQTENLEDTIRKQTAVNMAINTLSYSEMKAVAAILGELDGNEGRLTASVIADRIGITRSVIVNALRKLESAGIIESRSLGMKGTYLKVINEGIFAKLKEF.

The tract at residues 1–159 is GAF domain; that stretch reads MPNLLEKTRK…SSTVVGIQLL (159 aa). A DNA-binding region (H-T-H motif) is located at residues 207 to 226; sequence ASVIADRIGITRSVIVNALR.

The protein belongs to the CodY family.

It is found in the cytoplasm. Functionally, DNA-binding global transcriptional regulator which is involved in the adaptive response to starvation and acts by directly or indirectly controlling the expression of numerous genes in response to nutrient availability. During rapid exponential growth, CodY is highly active and represses genes whose products allow adaptation to nutrient depletion. The protein is Global transcriptional regulator CodY of Streptococcus pyogenes serotype M3 (strain SSI-1).